A 354-amino-acid chain; its full sequence is UPF0283 membrane protein Meso_1416 (354 aa).

The tract at residues 1 to 28 (MSEPRRPAAFRIEPAPSPSPEATREDVR) is disordered. A run of 2 helical transmembrane segments spans residues 71 to 91 (LGAV…GLWA) and 105 to 125 (LGWL…AIVV).

The protein belongs to the UPF0283 family.

Its subcellular location is the cell inner membrane. The sequence is that of UPF0283 membrane protein Meso_1416 from Chelativorans sp. (strain BNC1).